The following is a 161-amino-acid chain: Putative sporulation sigma factor-processing peptidase (161 aa).

The active site involves D38.

This sequence belongs to the peptidase U4 family.

Probably activates the RNA polymerase sigma-35 factor at the stage II of sporulation. In Bacillus thuringiensis subsp. kurstaki, this protein is Putative sporulation sigma factor-processing peptidase.